The sequence spans 391 residues: Elongation factor Tu (391 aa).

Positions Lys-10 to Val-201 constitute a tr-type G domain. The G1 stretch occupies residues Gly-19–Thr-26. Residue Gly-19–Thr-26 coordinates GTP. Thr-26 serves as a coordination point for Mg(2+). The interval Gly-55 to Ser-59 is G2. The interval Asp-76 to Gly-79 is G3. Residues Asp-76–His-80 and Asn-131–Asp-134 contribute to the GTP site. The segment at Asn-131 to Asp-134 is G4. Residues Ser-169–Leu-171 are G5.

It belongs to the TRAFAC class translation factor GTPase superfamily. Classic translation factor GTPase family. EF-Tu/EF-1A subfamily. Monomer.

The protein resides in the cytoplasm. The enzyme catalyses GTP + H2O = GDP + phosphate + H(+). GTP hydrolase that promotes the GTP-dependent binding of aminoacyl-tRNA to the A-site of ribosomes during protein biosynthesis. This Mesorhizobium japonicum (strain LMG 29417 / CECT 9101 / MAFF 303099) (Mesorhizobium loti (strain MAFF 303099)) protein is Elongation factor Tu.